Consider the following 649-residue polypeptide: Endoplasmic reticulum membrane protein 65 (649 aa).

Positions 1 to 55 are disordered; sequence MGSNTSPGQADPLESENESSLTSRFLPNKRDGGKDNESVIPEKEEPDLNEPVLAV. Residues 1–165 are Cytoplasmic-facing; that stretch reads MGSNTSPGQA…LATPYAIEKT (165 aa). The span at 28-43 shows a compositional bias: basic and acidic residues; that stretch reads NKRDGGKDNESVIPEK. Position 94 is a phosphoserine (Ser94). Residues 166–186 form a helical membrane-spanning segment; it reads FLFGWFVSVDSFLYIFTLFPI. At 187-302 the chain is on the lumenal side; sequence RVLISFFTLS…NFWNPAGWMT (116 aa). Residue Asn215 is glycosylated (N-linked (GlcNAc...) asparagine). The helical transmembrane segment at 303–323 threads the bilayer; that stretch reads FFYYFAISLAYMVLHTLVLLY. The Cytoplasmic segment spans residues 324 to 366; it reads QIITLNVTVNSYSNAVLALLMSNQLVEIKGAVFKKFEKENLFQ. The helical transmembrane segment at 367–387 threads the bilayer; sequence LTCSDVVERFQITIMVIIIFL. Over 388–414 the chain is Lumenal; it reads RNLAELYTTSSLDQPLLTFKRLKTLLA. Residues 415–435 traverse the membrane as a helical segment; that stretch reads PFFWVIGSELFVDWLKHAFII. Residues 436–479 lie on the Cytoplasmic side of the membrane; the sequence is KFNYIKPSIYSRFTDVLCHDYVASGAQLTQTVTGCSQQVARRMG. Residues 480–500 traverse the membrane as a helical segment; it reads LPVLPLVCVFIRTSMQTWSMF. Residues 501–557 lie on the Lumenal side of the membrane; that stretch reads RSTHSMKQEIAKSIGTIFPTKDNYVYYLPNKEANTYNAGKEASWETLLLSVVRGKSG. Residues 558-578 form a helical membrane-spanning segment; the sequence is IAFLFFMAIMLKLLLGKAILA. At 579 to 649 the chain is on the cytoplasmic side; that stretch reads ITQSRYESMQ…RYAMHSKRIW (71 aa).

It belongs to the TAPT1 family. As to quaternary structure, interacts with slp1.

It is found in the endoplasmic reticulum membrane. In terms of biological role, may be involved in membrane protein folding. The protein is Endoplasmic reticulum membrane protein 65 of Schizosaccharomyces pombe (strain 972 / ATCC 24843) (Fission yeast).